Consider the following 145-residue polypeptide: D-aminoacyl-tRNA deacylase (145 aa).

Positions 137–138 (GP) match the Gly-cisPro motif, important for rejection of L-amino acids motif.

This sequence belongs to the DTD family. As to quaternary structure, homodimer.

The protein resides in the cytoplasm. The enzyme catalyses glycyl-tRNA(Ala) + H2O = tRNA(Ala) + glycine + H(+). It catalyses the reaction a D-aminoacyl-tRNA + H2O = a tRNA + a D-alpha-amino acid + H(+). Functionally, an aminoacyl-tRNA editing enzyme that deacylates mischarged D-aminoacyl-tRNAs. Also deacylates mischarged glycyl-tRNA(Ala), protecting cells against glycine mischarging by AlaRS. Acts via tRNA-based rather than protein-based catalysis; rejects L-amino acids rather than detecting D-amino acids in the active site. By recycling D-aminoacyl-tRNA to D-amino acids and free tRNA molecules, this enzyme counteracts the toxicity associated with the formation of D-aminoacyl-tRNA entities in vivo and helps enforce protein L-homochirality. The protein is D-aminoacyl-tRNA deacylase of Salmonella arizonae (strain ATCC BAA-731 / CDC346-86 / RSK2980).